The following is a 160-amino-acid chain: 2-C-methyl-D-erythritol 2,4-cyclodiphosphate synthase (160 aa).

Residues Asp10 and His12 each coordinate a divalent metal cation. Residues 10–12 (DVH) and 36–37 (HS) each bind 4-CDP-2-C-methyl-D-erythritol 2-phosphate. His44 contacts a divalent metal cation. 4-CDP-2-C-methyl-D-erythritol 2-phosphate-binding positions include 58-60 (DIG), 63-67 (FPDTD), 102-108 (AQAPKMA), 134-137 (TTTE), Phe141, and Arg144.

The protein belongs to the IspF family. In terms of assembly, homotrimer. A divalent metal cation serves as cofactor.

It carries out the reaction 4-CDP-2-C-methyl-D-erythritol 2-phosphate = 2-C-methyl-D-erythritol 2,4-cyclic diphosphate + CMP. It functions in the pathway isoprenoid biosynthesis; isopentenyl diphosphate biosynthesis via DXP pathway; isopentenyl diphosphate from 1-deoxy-D-xylulose 5-phosphate: step 4/6. Involved in the biosynthesis of isopentenyl diphosphate (IPP) and dimethylallyl diphosphate (DMAPP), two major building blocks of isoprenoid compounds. Catalyzes the conversion of 4-diphosphocytidyl-2-C-methyl-D-erythritol 2-phosphate (CDP-ME2P) to 2-C-methyl-D-erythritol 2,4-cyclodiphosphate (ME-CPP) with a corresponding release of cytidine 5-monophosphate (CMP). The sequence is that of 2-C-methyl-D-erythritol 2,4-cyclodiphosphate synthase from Shewanella denitrificans (strain OS217 / ATCC BAA-1090 / DSM 15013).